Reading from the N-terminus, the 385-residue chain is 1-deoxy-D-xylulose 5-phosphate reductoisomerase (385 aa).

Positions 13, 14, 15, 16, 40, and 122 each coordinate NADPH. Position 123 (Lys123) interacts with 1-deoxy-D-xylulose 5-phosphate. An NADPH-binding site is contributed by Glu124. Asp148 is a binding site for Mn(2+). 1-deoxy-D-xylulose 5-phosphate-binding residues include Ser149, Glu150, Ser177, and His200. Glu150 contacts Mn(2+). NADPH is bound at residue Gly206. Positions 213, 218, 219, and 222 each coordinate 1-deoxy-D-xylulose 5-phosphate. Mn(2+) is bound at residue Glu222.

The protein belongs to the DXR family. Mg(2+) is required as a cofactor. It depends on Mn(2+) as a cofactor.

It catalyses the reaction 2-C-methyl-D-erythritol 4-phosphate + NADP(+) = 1-deoxy-D-xylulose 5-phosphate + NADPH + H(+). It functions in the pathway isoprenoid biosynthesis; isopentenyl diphosphate biosynthesis via DXP pathway; isopentenyl diphosphate from 1-deoxy-D-xylulose 5-phosphate: step 1/6. Functionally, catalyzes the NADPH-dependent rearrangement and reduction of 1-deoxy-D-xylulose-5-phosphate (DXP) to 2-C-methyl-D-erythritol 4-phosphate (MEP). The protein is 1-deoxy-D-xylulose 5-phosphate reductoisomerase of Francisella tularensis subsp. novicida (strain U112).